Reading from the N-terminus, the 295-residue chain is Glutamyl-Q tRNA(Asp) synthetase (295 aa).

L-glutamate-binding positions include 5 to 9 and Glu41; that span reads RFAPS. A 'HIGH' region motif is present at residues 8–18; it reads PSPTGLLHIGS. Residues Cys97, Cys99, Tyr117, and Cys121 each contribute to the Zn(2+) site. Positions 178 and 196 each coordinate L-glutamate. Positions 234–238 match the 'KMSKS' region motif; it reads KWSKQ. Position 237 (Lys237) interacts with ATP.

The protein belongs to the class-I aminoacyl-tRNA synthetase family. GluQ subfamily. Zn(2+) is required as a cofactor.

Functionally, catalyzes the tRNA-independent activation of glutamate in presence of ATP and the subsequent transfer of glutamate onto a tRNA(Asp). Glutamate is transferred on the 2-amino-5-(4,5-dihydroxy-2-cyclopenten-1-yl) moiety of the queuosine in the wobble position of the QUC anticodon. This chain is Glutamyl-Q tRNA(Asp) synthetase, found in Neisseria meningitidis serogroup A / serotype 4A (strain DSM 15465 / Z2491).